The primary structure comprises 301 residues: Bifunctional protein FolD (301 aa).

Residues 166–168 (GKS), Ser191, and Ile232 each bind NADP(+).

This sequence belongs to the tetrahydrofolate dehydrogenase/cyclohydrolase family. Homodimer.

It catalyses the reaction (6R)-5,10-methylene-5,6,7,8-tetrahydrofolate + NADP(+) = (6R)-5,10-methenyltetrahydrofolate + NADPH. It carries out the reaction (6R)-5,10-methenyltetrahydrofolate + H2O = (6R)-10-formyltetrahydrofolate + H(+). It functions in the pathway one-carbon metabolism; tetrahydrofolate interconversion. In terms of biological role, catalyzes the oxidation of 5,10-methylenetetrahydrofolate to 5,10-methenyltetrahydrofolate and then the hydrolysis of 5,10-methenyltetrahydrofolate to 10-formyltetrahydrofolate. The sequence is that of Bifunctional protein FolD from Orientia tsutsugamushi (strain Boryong) (Rickettsia tsutsugamushi).